A 354-amino-acid polypeptide reads, in one-letter code: Methylthioribose-1-phosphate isomerase (354 aa).

Residue aspartate 246 is the Proton donor of the active site.

This sequence belongs to the eIF-2B alpha/beta/delta subunits family. MtnA subfamily.

It localises to the cytoplasm. The protein resides in the nucleus. The enzyme catalyses 5-(methylsulfanyl)-alpha-D-ribose 1-phosphate = 5-(methylsulfanyl)-D-ribulose 1-phosphate. Its pathway is amino-acid biosynthesis; L-methionine biosynthesis via salvage pathway; L-methionine from S-methyl-5-thio-alpha-D-ribose 1-phosphate: step 1/6. Functionally, catalyzes the interconversion of methylthioribose-1-phosphate (MTR-1-P) into methylthioribulose-1-phosphate (MTRu-1-P). This is Methylthioribose-1-phosphate isomerase (mri1) from Xenopus laevis (African clawed frog).